A 275-amino-acid polypeptide reads, in one-letter code: Energy-coupling factor transporter ATP-binding protein EcfA1 (275 aa).

The region spanning isoleucine 5–aspartate 240 is the ABC transporter domain. Glycine 40–serine 47 is a binding site for ATP.

The protein belongs to the ABC transporter superfamily. Energy-coupling factor EcfA family. Forms a stable energy-coupling factor (ECF) transporter complex composed of 2 membrane-embedded substrate-binding proteins (S component), 2 ATP-binding proteins (A component) and 2 transmembrane proteins (T component).

It is found in the cell membrane. In terms of biological role, ATP-binding (A) component of a common energy-coupling factor (ECF) ABC-transporter complex. Unlike classic ABC transporters this ECF transporter provides the energy necessary to transport a number of different substrates. This is Energy-coupling factor transporter ATP-binding protein EcfA1 from Streptococcus pneumoniae serotype 4 (strain ATCC BAA-334 / TIGR4).